The primary structure comprises 963 residues: Importin-13 (963 aa).

20 HEAT repeats span residues 24-54 (ENVE…QAQV), 56-88 (PQAW…KISR), 95-135 (TDQY…LSMM), 142-179 (AVAD…EFQT), 194-231 (LAVE…SWVQ), 236-268 (LQDC…NAIS), 276-325 (VNTL…ALLD), 330-372 (WQSF…DDIL), 375-438 (EAEK…YEML), 440-476 (AELL…FQSI), 487-522 (VVPG…WLAD), 524-558 (PVMI…CREC), 562-600 (LPPY…LLSA), 603-648 (VEEI…SNLF), 676-716 (PVVV…VKTL), 720-754 (FAPM…VHIF), 761-803 (FPPI…ALKR), 815-845 (VKAV…TELL), 860-893 (EDGR…FALN), and 897-931 (FSLL…QQIL). The Importin N-terminal domain maps to 45 to 111 (AQKWLMQAQV…KAQLFTQITR (67 aa)).

It belongs to the importin beta family. As to quaternary structure, interacts with UBC9, RAN, RBM8A, eIF-1A and PAX6. In terms of tissue distribution, expressed in fetal brain, heart, intestine and kidney.

The protein localises to the cytoplasm. It is found in the nucleus. Functions in nuclear protein import as nuclear transport receptor. Serves as receptor for nuclear localization signals (NLS) in cargo substrates. Is thought to mediate docking of the importin/substrate complex to the nuclear pore complex (NPC) through binding to nucleoporin and the complex is subsequently translocated through the pore by an energy requiring, Ran-dependent mechanism. At the nucleoplasmic side of the NPC, Ran binds to the importin, the importin/substrate complex dissociates and importin is re-exported from the nucleus to the cytoplasm where GTP hydrolysis releases Ran. The directionality of nuclear import is thought to be conferred by an asymmetric distribution of the GTP- and GDP-bound forms of Ran between the cytoplasm and nucleus. Mediates the nuclear import of UBC9, the RBM8A/MAGOH complex, PAX6 and probably other members of the paired homeobox family. Also mediates nuclear export of eIF-1A, and the cytoplasmic release of eIF-1A is triggered by the loading of import substrates onto IPO13. This Homo sapiens (Human) protein is Importin-13 (IPO13).